A 292-amino-acid polypeptide reads, in one-letter code: Transcription factor-like protein DPA (292 aa).

Positions 1-25 (MSMEMELFVTPEKQRQHPSVSVEKT) are disordered. The DNA-binding element occupies 51–135 (GGGLRQFSVM…KKEIRWKGLP (85 aa)). The short motif at 101–135 (NEKNIRRRVYDALNVFMALDIIARDKKEIRWKGLP) is the DEF box element. Residues 163–184 (LKELREKVSSLESLMSRNQEMV) are a coiled coil. The segment at 246–280 (QEQNRVSSSSSTHHQSQHSSAHSSSSSCIASGTSG) is disordered. Low complexity predominate over residues 252–280 (SSSSSTHHQSQHSSAHSSSSSCIASGTSG).

It belongs to the E2F/DP family. In terms of assembly, heterodimer with E2F. Interacts preferentially with E2FA and E2FB, but also with E2FC. Strongly expressed in the actively dividing tissues of the shoot apical meristem, young leaf primordia, the vascular tissues of the maturing leaf primordia and axillary buds.

The protein localises to the cytoplasm. It localises to the nucleus. Its function is as follows. Involved in the regulation of the G1/S transition. Increases the DNA binding and the transactivation activities of E2F proteins after heterodimerization. The complex DPA/E2FA promotes cell division and acts as a regulator of the endocycle. Positively regulates the activity of S phase-specific genes. This chain is Transcription factor-like protein DPA (DPA), found in Arabidopsis thaliana (Mouse-ear cress).